Reading from the N-terminus, the 539-residue chain is Glucans biosynthesis protein D (539 aa).

The segment at residues 1-31 (MHRRNLLKASMALAAYTGLSASGLLAARAWA) is a signal peptide (tat-type signal).

It belongs to the OpgD/OpgG family. Post-translationally, predicted to be exported by the Tat system. The position of the signal peptide cleavage has not been experimentally proven.

The protein resides in the periplasm. It functions in the pathway glycan metabolism; osmoregulated periplasmic glucan (OPG) biosynthesis. Functionally, probably involved in the control of the structural glucose backbone of osmoregulated periplasmic glucans (OPGs). The chain is Glucans biosynthesis protein D from Pseudomonas fluorescens (strain ATCC BAA-477 / NRRL B-23932 / Pf-5).